We begin with the raw amino-acid sequence, 211 residues long: Superoxide dismutase [Mn], mitochondrial (211 aa).

Residues 1–24 (MLCRAVCSASRRLAPALGILGVRQ) constitute a mitochondrion transit peptide. A Mn(2+)-binding site is contributed by His-50. Position 58 is a 3'-nitrotyrosine (Tyr-58). 2 positions are modified to N6-acetyllysine; alternate: Lys-68 and Lys-75. N6-succinyllysine; alternate is present on residues Lys-68 and Lys-75. His-98 lines the Mn(2+) pocket. At Lys-114 the chain carries N6-acetyllysine. N6-acetyllysine; alternate is present on residues Lys-122 and Lys-130. 2 positions are modified to N6-succinyllysine; alternate: Lys-122 and Lys-130. Residues Asp-183 and His-187 each coordinate Mn(2+). The residue at position 202 (Lys-202) is an N6-acetyllysine.

It belongs to the iron/manganese superoxide dismutase family. Homotetramer. Requires Mn(2+) as cofactor. Post-translationally, nitrated under oxidative stress. Nitration coupled with oxidation inhibits the catalytic activity. In terms of processing, acetylation at Lys-122 decreases enzymatic activity. Deacetylated by SIRT3 upon exposure to ionizing radiations or after long fasting. Polyubiquitinated; leading to proteasomal degradation. Deubiquitinated by USP36 which increases protein stability.

Its subcellular location is the mitochondrion matrix. It catalyses the reaction 2 superoxide + 2 H(+) = H2O2 + O2. In terms of biological role, destroys superoxide anion radicals which are normally produced within the cells and which are toxic to biological systems. This is Superoxide dismutase [Mn], mitochondrial (SOD2) from Cavia porcellus (Guinea pig).